A 300-amino-acid polypeptide reads, in one-letter code: Ribosomal protein L11 methyltransferase (300 aa).

The S-adenosyl-L-methionine site is built by threonine 141, glycine 164, aspartate 186, and asparagine 233.

The protein belongs to the methyltransferase superfamily. PrmA family.

It localises to the cytoplasm. The catalysed reaction is L-lysyl-[protein] + 3 S-adenosyl-L-methionine = N(6),N(6),N(6)-trimethyl-L-lysyl-[protein] + 3 S-adenosyl-L-homocysteine + 3 H(+). Functionally, methylates ribosomal protein L11. The sequence is that of Ribosomal protein L11 methyltransferase from Synechocystis sp. (strain ATCC 27184 / PCC 6803 / Kazusa).